The sequence spans 83 residues: Conotoxin Im22.1 (83 aa).

Positions 1-18 (MMMRVFIAMFFLLALVEA) are cleaved as a signal peptide. A propeptide spanning residues 19-26 (GWPRLYDK) is cleaved from the precursor.

The protein belongs to the conotoxin E superfamily. Contain 4 disulfide bonds. In terms of tissue distribution, expressed by the venom duct.

The protein resides in the secreted. Its function is as follows. Probable neurotoxin. This chain is Conotoxin Im22.1, found in Conus imperialis (Imperial cone).